We begin with the raw amino-acid sequence, 92 residues long: Small ribosomal subunit protein uS19 (92 aa).

This sequence belongs to the universal ribosomal protein uS19 family. As to quaternary structure, part of the 30S ribosomal subunit.

In terms of biological role, protein S19 forms a complex with S13 that binds strongly to the 16S ribosomal RNA. The sequence is that of Small ribosomal subunit protein uS19 (rpsS) from Bacillus subtilis (strain 168).